The sequence spans 307 residues: ATP synthase gamma chain (307 aa).

The protein belongs to the ATPase gamma chain family. F-type ATPases have 2 components, CF(1) - the catalytic core - and CF(0) - the membrane proton channel. CF(1) has five subunits: alpha(3), beta(3), gamma(1), delta(1), epsilon(1). CF(0) has three main subunits: a, b and c.

The protein localises to the cell membrane. In terms of biological role, produces ATP from ADP in the presence of a proton gradient across the membrane. The gamma chain is believed to be important in regulating ATPase activity and the flow of protons through the CF(0) complex. The polypeptide is ATP synthase gamma chain (Mycolicibacterium smegmatis (strain ATCC 700084 / mc(2)155) (Mycobacterium smegmatis)).